Reading from the N-terminus, the 666-residue chain is Probable potassium transport system protein Kup (666 aa).

12 helical membrane-spanning segments follow: residues 16-36 (GFII…LYTM), 58-78 (ISLI…LVAL), 99-119 (TPWL…DGAL), 141-161 (IFQN…LLFA), 167-187 (TGVI…FLGI), 221-241 (IFIL…YSDL), 253-273 (WPFV…WILA), 292-312 (FTMH…QALI), 343-363 (TYIP…VLLF), 373-393 (YGLA…FFLI), 402-422 (VLLM…ASAV), and 424-444 (FMHG…IMTI).

Belongs to the HAK/KUP transporter (TC 2.A.72) family.

It localises to the cell membrane. The catalysed reaction is K(+)(in) + H(+)(in) = K(+)(out) + H(+)(out). Its function is as follows. Transport of potassium into the cell. Likely operates as a K(+):H(+) symporter. In Streptococcus agalactiae serotype V (strain ATCC BAA-611 / 2603 V/R), this protein is Probable potassium transport system protein Kup.